The sequence spans 520 residues: Amine oxidase [flavin-containing] B (520 aa).

At Ser-2 the chain carries N-acetylserine. At 2-489 (SSKCDVVVVG…TFLERHLPSV (488 aa)) the chain is on the cytoplasmic side. Lys-52 is subject to N6-acetyllysine. Cys-397 carries the post-translational modification S-8alpha-FAD cysteine. The helical; Anchor for type IV membrane protein transmembrane segment at 490–516 (PGLLRLIGLTAIFSATALGYLAHKRGL) threads the bilayer. The Mitochondrial intermembrane segment spans residues 517 to 520 (LVRV).

It belongs to the flavin monoamine oxidase family. In terms of assembly, monomer, homo- or heterodimer (containing two subunits of similar size). Each subunit contains a covalently bound flavin. Enzymatically active as monomer. Requires FAD as cofactor.

The protein resides in the mitochondrion outer membrane. The catalysed reaction is a secondary aliphatic amine + O2 + H2O = a primary amine + an aldehyde + H2O2. The enzyme catalyses (R)-adrenaline + O2 + H2O = (R)-3,4-dihydroxymandelaldehyde + methylamine + H2O2. It carries out the reaction a primary methyl amine + O2 + H2O = an aldehyde + H2O2 + NH4(+). It catalyses the reaction benzylamine + O2 + H2O = benzaldehyde + H2O2 + NH4(+). The catalysed reaction is dopamine + O2 + H2O = 3,4-dihydroxyphenylacetaldehyde + H2O2 + NH4(+). The enzyme catalyses tyramine + O2 + H2O = (4-hydroxyphenyl)acetaldehyde + H2O2 + NH4(+). It carries out the reaction (R)-noradrenaline + O2 + H2O = (R)-3,4-dihydroxymandelaldehyde + H2O2 + NH4(+). It catalyses the reaction 2-phenylethylamine + O2 + H2O = 2-phenylacetaldehyde + H2O2 + NH4(+). The catalysed reaction is N-acetylputrescine + O2 + H2O = 4-acetamidobutanal + H2O2 + NH4(+). In terms of biological role, catalyzes the oxidative deamination of primary and some secondary amines such as neurotransmitters, and exogenous amines including the tertiary amine, neurotoxin 1-methyl-4-phenyl-1,2,3,6-tetrahydropyridine (MPTP), with concomitant reduction of oxygen to hydrogen peroxide and participates in the metabolism of neuroactive and vasoactive amines in the central nervous system and peripheral tissues. Preferentially degrades benzylamine and phenylethylamine. The chain is Amine oxidase [flavin-containing] B from Sus scrofa (Pig).